Consider the following 194-residue polypeptide: MTAITITDAAHDYLADLLSKQNTPGIGIRVFITQPGTQYAETCIAYCKPGEEKPEDTALGLKSFTAYIDAFSEAFLDDAVVDYATDRMGGQLTIKAPNAKVPNVNADSPVNERINYYLQTEINPGLASHGGQVSLIDVVDDGIAVLKFGGGCQGCGQADVTLREGIERTLLERIPELKGVRDVTDHTQKENAYY.

[4Fe-4S] cluster is bound by residues Cys-152 and Cys-155.

This sequence belongs to the NfuA family. As to quaternary structure, homodimer. The cofactor is [4Fe-4S] cluster.

Functionally, involved in iron-sulfur cluster biogenesis. Binds a 4Fe-4S cluster, can transfer this cluster to apoproteins, and thereby intervenes in the maturation of Fe/S proteins. Could also act as a scaffold/chaperone for damaged Fe/S proteins. This is Fe/S biogenesis protein NfuA from Pseudomonas fluorescens (strain SBW25).